The primary structure comprises 177 residues: Large ribosomal subunit protein uL6 (177 aa).

This sequence belongs to the universal ribosomal protein uL6 family. Part of the 50S ribosomal subunit.

Functionally, this protein binds to the 23S rRNA, and is important in its secondary structure. It is located near the subunit interface in the base of the L7/L12 stalk, and near the tRNA binding site of the peptidyltransferase center. This is Large ribosomal subunit protein uL6 from Neisseria meningitidis serogroup B (strain ATCC BAA-335 / MC58).